The sequence spans 298 residues: Bifunctional protein FolD (298 aa).

Residues 165-167, serine 190, and isoleucine 231 each bind NADP(+); that span reads GRS.

It belongs to the tetrahydrofolate dehydrogenase/cyclohydrolase family. Homodimer.

The enzyme catalyses (6R)-5,10-methylene-5,6,7,8-tetrahydrofolate + NADP(+) = (6R)-5,10-methenyltetrahydrofolate + NADPH. It carries out the reaction (6R)-5,10-methenyltetrahydrofolate + H2O = (6R)-10-formyltetrahydrofolate + H(+). It functions in the pathway one-carbon metabolism; tetrahydrofolate interconversion. Functionally, catalyzes the oxidation of 5,10-methylenetetrahydrofolate to 5,10-methenyltetrahydrofolate and then the hydrolysis of 5,10-methenyltetrahydrofolate to 10-formyltetrahydrofolate. This chain is Bifunctional protein FolD, found in Prochlorococcus marinus (strain MIT 9515).